The following is a 527-amino-acid chain: MMQKIQRFGSAMFVPVLLFAFAGIIVGISTLFKNKTLMGPLADPDGFWYQCWYIIEQGGWTVFNQMPLLFAIGIPVALAKKAQARACLEALTVYLTFNYFVSAILTVWGGAFGVDMNQEVGGTSGLTMIAGIKTLDTNIIGAIFISSIVVFLHNRYFDKKLPDFLGIFQGSTYIVMISFFIMIPIALAVSYIWPMVQSGIGSLQSFLVASGAVGVWIYTFLERILIPTGLHHFIYTPFIYGPAVAEGGIVTYWAQHLGEYSQSAKPLKELFPQGGFALHGNSKIFGIPGIALAFYVTAKKEKKKLVAGLLIPVTLTAIVAGITEPIEFTFLFISPFLFAVHAVLAATMSTVMYMAGVVGNMGGGLIEAVTLNWIPLFGSHGMTYVYQILIGLSFTAIYFFVFRFLILKFNIATPGREKDEQQETKLYSKKEYRERKNKDETASAAETADDTAFLYIEALGGKDNITEVTNCATRLRVSVKDETKVEPDSVFRALGAHGVVRNGKAFQVIIGLSVPQMRERVEKILNQ.

In terms of domain architecture, PTS EIIC type-1 spans 1–418 (MMQKIQRFGS…FNIATPGREK (418 aa)). Helical transmembrane passes span 8-28 (FGSA…IVGI), 59-79 (GWTV…VALA), 93-113 (VYLT…GAFG), 132-152 (IKTL…VVFL), 173-193 (YIVM…SYIW), 200-220 (IGSL…IYTF), 224-244 (ILIP…GPAV), 276-296 (FALH…AFYV), 305-325 (LVAG…ITEP), 326-346 (IEFT…VLAA), 357-377 (VVGN…IPLF), and 382-402 (MTYV…FFVF). The PTS EIIB type-1 domain maps to 449-527 (DDTAFLYIEA…RERVEKILNQ (79 aa)). Cysteine 471 functions as the Phosphocysteine intermediate; for EIIB activity in the catalytic mechanism.

It is found in the cell membrane. The enzyme catalyses D-maltose(out) + N(pros)-phospho-L-histidyl-[protein] = alpha-maltose 6'-phosphate(in) + L-histidyl-[protein]. In terms of biological role, the phosphoenolpyruvate-dependent sugar phosphotransferase system (sugar PTS), a major carbohydrate active transport system, catalyzes the phosphorylation of incoming sugar substrates concomitantly with their translocation across the cell membrane. This system is involved in maltose transport. The sequence is that of PTS system maltose-specific EIICB component from Bacillus subtilis (strain 168).